The chain runs to 157 residues: Arginine repressor (157 aa).

This sequence belongs to the ArgR family.

Its subcellular location is the cytoplasm. The protein operates within amino-acid biosynthesis; L-arginine biosynthesis [regulation]. Regulates arginine biosynthesis genes. The protein is Arginine repressor of Colwellia psychrerythraea (strain 34H / ATCC BAA-681) (Vibrio psychroerythus).